Consider the following 165-residue polypeptide: UPF0303 protein Bamb_1459 (165 aa).

This sequence belongs to the UPF0303 family.

In Burkholderia ambifaria (strain ATCC BAA-244 / DSM 16087 / CCUG 44356 / LMG 19182 / AMMD) (Burkholderia cepacia (strain AMMD)), this protein is UPF0303 protein Bamb_1459.